Here is a 153-residue protein sequence, read N- to C-terminus: E3 ubiquitin-protein ligase AIRP1 (153 aa).

The segment at 104–145 (CPICLEEYEIDNPKLLTKCGHDFHLACILAWMERSEACPVCD) adopts an RING-type; atypical zinc-finger fold.

It localises to the cytoplasm. The protein resides in the cytosol. It carries out the reaction S-ubiquitinyl-[E2 ubiquitin-conjugating enzyme]-L-cysteine + [acceptor protein]-L-lysine = [E2 ubiquitin-conjugating enzyme]-L-cysteine + N(6)-ubiquitinyl-[acceptor protein]-L-lysine.. Its function is as follows. Possesses E3 ubiquitin-protein ligase activity in vitro when associated with the E2 enzyme UBC8 in vitro. Plays combinatory roles with AIRP2 in the positive regulation of the abscisic acid-mediated drought stress response. This chain is E3 ubiquitin-protein ligase AIRP1, found in Arabidopsis thaliana (Mouse-ear cress).